Here is a 429-residue protein sequence, read N- to C-terminus: Methanol:N,N-dimethyl-4-nitrosoaniline oxidoreductase (429 aa).

This sequence belongs to the iron-containing alcohol dehydrogenase family. In terms of assembly, homodecamer. Mg(2+) is required as a cofactor. Zn(2+) serves as cofactor. Requires NADPH as cofactor.

It catalyses the reaction methanol + A = formaldehyde + AH2. Inhibited by azide and hydrazine. Catalyzes the oxidation of methanol to yield formaldehyde. While the in vivo electron acceptor is not known, N,N-dimethyl-4-nitrosoaniline (NDMA) can serve this function in vitro and is reduced to 4-(hydroxylamino)-N,N-dimethylaniline. It can also use various other primary alcohols, polyols and formaldehyde. In addition, MNO is able to produce methylformate from methanol plus formaldehyde, and possesses a formaldehyde dismutase and a NADH-dependent formaldehyde reductase activity. In Amycolatopsis methanolica, this protein is Methanol:N,N-dimethyl-4-nitrosoaniline oxidoreductase (mno).